Here is a 943-residue protein sequence, read N- to C-terminus: Synaptotagmin-like protein 2 (943 aa).

Residues 1 to 57 (MIDLSFLTEEEQEAIMKVLQRDAALKRAEEERVRHLPEKVKDDQQLKNMSGQWFYEA) enclose the RabBD domain. Disordered stretches follow at residues 77-99 (RKKR…KESW), 118-291 (EEPE…VRFH), and 361-613 (ESDR…SNSG). The span at 82–99 (QVADEQSKDRANRAKESW) shows a compositional bias: basic and acidic residues. The segment covering 125–138 (APASPSSSVVNPVS) has biased composition (low complexity). The span at 174–192 (SQQTKNEQSKNGKTGLFQT) shows a compositional bias: polar residues. Basic and acidic residues predominate over residues 194–205 (KEGELSESKEES). Composition is skewed to polar residues over residues 382 to 394 (PQPS…LPFQ), 404 to 416 (KNET…SGSF), and 426 to 440 (EFLT…NSHT). Positions 524–537 (ELVRSAEDDQKADQ) are enriched in basic and acidic residues. A compositionally biased stretch (polar residues) spans 549–560 (STVSSQPDNQFS). Low complexity predominate over residues 603–613 (SSLTNLSSNSG). C2 domains follow at residues 637 to 762 (VKGS…LKWY) and 777 to 906 (NRGE…VDWM).

In terms of assembly, monomer. Binds NRXN1. Binds RAB27A that has been activated by GTP-binding via its N-terminus. Interacts with RAB27B.

It localises to the cell membrane. Its function is as follows. May act as a RAB27A effector protein and play a role in cytotoxic granule exocytosis in lymphocytes. The protein is Synaptotagmin-like protein 2 (SYTL2) of Bos taurus (Bovine).